The primary structure comprises 558 residues: 2-isopropylmalate synthase (558 aa).

The 274-residue stretch at 30–303 folds into the Pyruvate carboxyltransferase domain; it reads PIWCSVDLRD…DPKLDCSDIE (274 aa). Mg(2+)-binding residues include aspartate 39, histidine 242, histidine 244, and asparagine 278. Residues 437 to 558 are regulatory domain; that stretch reads QPGARIKFVD…ANRVLDVVGK (122 aa).

The protein belongs to the alpha-IPM synthase/homocitrate synthase family. LeuA type 2 subfamily. As to quaternary structure, homodimer. The cofactor is Mg(2+).

It localises to the cytoplasm. It catalyses the reaction 3-methyl-2-oxobutanoate + acetyl-CoA + H2O = (2S)-2-isopropylmalate + CoA + H(+). The protein operates within amino-acid biosynthesis; L-leucine biosynthesis; L-leucine from 3-methyl-2-oxobutanoate: step 1/4. Functionally, catalyzes the condensation of the acetyl group of acetyl-CoA with 3-methyl-2-oxobutanoate (2-ketoisovalerate) to form 3-carboxy-3-hydroxy-4-methylpentanoate (2-isopropylmalate). This chain is 2-isopropylmalate synthase, found in Rhizobium meliloti (strain 1021) (Ensifer meliloti).